The sequence spans 211 residues: Thiamine-phosphate synthase (211 aa).

Residues 37-41 and Asn-69 each bind 4-amino-2-methyl-5-(diphosphooxymethyl)pyrimidine; that span reads QLRIK. Mg(2+) is bound by residues Asp-70 and Asp-89. Ser-108 contributes to the 4-amino-2-methyl-5-(diphosphooxymethyl)pyrimidine binding site. 134–136 serves as a coordination point for 2-[(2R,5Z)-2-carboxy-4-methylthiazol-5(2H)-ylidene]ethyl phosphate; it reads TQT. Residue Lys-137 coordinates 4-amino-2-methyl-5-(diphosphooxymethyl)pyrimidine. Residues Gly-166 and 186–187 contribute to the 2-[(2R,5Z)-2-carboxy-4-methylthiazol-5(2H)-ylidene]ethyl phosphate site; that span reads VS.

Belongs to the thiamine-phosphate synthase family. The cofactor is Mg(2+).

It carries out the reaction 2-[(2R,5Z)-2-carboxy-4-methylthiazol-5(2H)-ylidene]ethyl phosphate + 4-amino-2-methyl-5-(diphosphooxymethyl)pyrimidine + 2 H(+) = thiamine phosphate + CO2 + diphosphate. It catalyses the reaction 2-(2-carboxy-4-methylthiazol-5-yl)ethyl phosphate + 4-amino-2-methyl-5-(diphosphooxymethyl)pyrimidine + 2 H(+) = thiamine phosphate + CO2 + diphosphate. The catalysed reaction is 4-methyl-5-(2-phosphooxyethyl)-thiazole + 4-amino-2-methyl-5-(diphosphooxymethyl)pyrimidine + H(+) = thiamine phosphate + diphosphate. It functions in the pathway cofactor biosynthesis; thiamine diphosphate biosynthesis; thiamine phosphate from 4-amino-2-methyl-5-diphosphomethylpyrimidine and 4-methyl-5-(2-phosphoethyl)-thiazole: step 1/1. Condenses 4-methyl-5-(beta-hydroxyethyl)thiazole monophosphate (THZ-P) and 2-methyl-4-amino-5-hydroxymethyl pyrimidine pyrophosphate (HMP-PP) to form thiamine monophosphate (TMP). This chain is Thiamine-phosphate synthase, found in Escherichia coli (strain SE11).